A 512-amino-acid chain; its full sequence is Lysine--tRNA ligase (512 aa).

2 residues coordinate Mg(2+): Glu-408 and Glu-415.

The protein belongs to the class-II aminoacyl-tRNA synthetase family. In terms of assembly, homodimer. Mg(2+) serves as cofactor.

It localises to the cytoplasm. It carries out the reaction tRNA(Lys) + L-lysine + ATP = L-lysyl-tRNA(Lys) + AMP + diphosphate. The protein is Lysine--tRNA ligase of Prochlorococcus marinus (strain MIT 9515).